The sequence spans 291 residues: ATP synthase subunit b 2 (291 aa).

The helical transmembrane segment at 2 to 22 threads the bilayer; sequence LIDGFTVVAQIVNFLILVWLL.

This sequence belongs to the ATPase B chain family. In terms of assembly, F-type ATPases have 2 components, F(1) - the catalytic core - and F(0) - the membrane proton channel. F(1) has five subunits: alpha(3), beta(3), gamma(1), delta(1), epsilon(1). F(0) has three main subunits: a(1), b(2) and c(10-14). The alpha and beta chains form an alternating ring which encloses part of the gamma chain. F(1) is attached to F(0) by a central stalk formed by the gamma and epsilon chains, while a peripheral stalk is formed by the delta and b chains.

It localises to the cell inner membrane. Its function is as follows. F(1)F(0) ATP synthase produces ATP from ADP in the presence of a proton or sodium gradient. F-type ATPases consist of two structural domains, F(1) containing the extramembraneous catalytic core and F(0) containing the membrane proton channel, linked together by a central stalk and a peripheral stalk. During catalysis, ATP synthesis in the catalytic domain of F(1) is coupled via a rotary mechanism of the central stalk subunits to proton translocation. Component of the F(0) channel, it forms part of the peripheral stalk, linking F(1) to F(0). This Nitrosospira multiformis (strain ATCC 25196 / NCIMB 11849 / C 71) protein is ATP synthase subunit b 2.